The sequence spans 837 residues: Striatin-interacting protein 1 (837 aa).

N-acetylmethionine is present on Met-1. Disordered stretches follow at residues 1–67 (MEPA…ESPD) and 333–423 (AASP…KGLP). The span at 18-35 (PQPPPPPPPAAAQPPPGA) shows a compositional bias: pro residues. The segment covering 36–46 (PRAAAGLLPGG) has biased composition (low complexity). The span at 47–60 (KAREFNRNQRKDSE) shows a compositional bias: basic and acidic residues. 3 positions are modified to phosphoserine: Ser-59, Ser-335, and Ser-339. A compositionally biased stretch (basic and acidic residues) spans 356 to 377 (KALIKQDNLDAFNERDPYKADD). The segment covering 378–391 (SREEEEENDDDNSL) has biased composition (acidic residues). Position 788 is a phosphoserine (Ser-788). The interval 796–837 (DNCLQSVLGQRVDLPEDFQMNYDLWLEREVFSKPISWEELLQ) is required for STRIPAK core complex formation.

This sequence belongs to the STRIP family. As to quaternary structure, part of the core of STRIPAK complexes composed of PP2A catalytic and scaffolding subunits, the striatins (PP2A regulatory subunits), the striatin-associated proteins MOB4, STRIP1 and STRIP2, PDCD10 and members of the STE20 kinases, such as STK24 and STK26. The STRIPAK complex can be extended by adapter proteins such as SLMAP:SIKE1, CTTNBP2 or CTTNBP2NL. Interacts with CDC42BPB. Interacts with CTTNBP2NL.

Its subcellular location is the cytoplasm. Functionally, plays a role in the regulation of cell morphology and cytoskeletal organization. Required in the cortical actin filament dynamics and cell shape. Part of the striatin-interacting phosphatase and kinase (STRIPAK) complexes. STRIPAK complexes have critical roles in protein (de)phosphorylation and are regulators of multiple signaling pathways including Hippo, MAPK, nuclear receptor and cytoskeleton remodeling. Different types of STRIPAK complexes are involved in a variety of biological processes such as cell growth, differentiation, apoptosis, metabolism and immune regulation. The chain is Striatin-interacting protein 1 from Homo sapiens (Human).